A 458-amino-acid polypeptide reads, in one-letter code: Exodeoxyribonuclease 7 large subunit (458 aa).

Belongs to the XseA family. Heterooligomer composed of large and small subunits.

The protein resides in the cytoplasm. It catalyses the reaction Exonucleolytic cleavage in either 5'- to 3'- or 3'- to 5'-direction to yield nucleoside 5'-phosphates.. Bidirectionally degrades single-stranded DNA into large acid-insoluble oligonucleotides, which are then degraded further into small acid-soluble oligonucleotides. This Shouchella clausii (strain KSM-K16) (Alkalihalobacillus clausii) protein is Exodeoxyribonuclease 7 large subunit.